Consider the following 342-residue polypeptide: S-adenosylmethionine:tRNA ribosyltransferase-isomerase (342 aa).

This sequence belongs to the QueA family. As to quaternary structure, monomer.

It localises to the cytoplasm. It carries out the reaction 7-aminomethyl-7-carbaguanosine(34) in tRNA + S-adenosyl-L-methionine = epoxyqueuosine(34) in tRNA + adenine + L-methionine + 2 H(+). The protein operates within tRNA modification; tRNA-queuosine biosynthesis. In terms of biological role, transfers and isomerizes the ribose moiety from AdoMet to the 7-aminomethyl group of 7-deazaguanine (preQ1-tRNA) to give epoxyqueuosine (oQ-tRNA). The sequence is that of S-adenosylmethionine:tRNA ribosyltransferase-isomerase from Streptococcus pneumoniae serotype 4 (strain ATCC BAA-334 / TIGR4).